A 141-amino-acid polypeptide reads, in one-letter code: ATP synthase epsilon chain (141 aa).

This sequence belongs to the ATPase epsilon chain family. In terms of assembly, F-type ATPases have 2 components, CF(1) - the catalytic core - and CF(0) - the membrane proton channel. CF(1) has five subunits: alpha(3), beta(3), gamma(1), delta(1), epsilon(1). CF(0) has three main subunits: a, b and c.

It localises to the cell inner membrane. Produces ATP from ADP in the presence of a proton gradient across the membrane. The sequence is that of ATP synthase epsilon chain from Halorhodospira halophila (strain DSM 244 / SL1) (Ectothiorhodospira halophila (strain DSM 244 / SL1)).